We begin with the raw amino-acid sequence, 380 residues long: Erythronate-4-phosphate dehydrogenase (380 aa).

The substrate site is built by Ser45 and Thr66. Positions 146 and 174 each coordinate NAD(+). Residue Arg207 is part of the active site. Asp231 provides a ligand contact to NAD(+). Glu236 is an active-site residue. The Proton donor role is filled by His253. Gly256 contacts NAD(+). Tyr257 provides a ligand contact to substrate.

This sequence belongs to the D-isomer specific 2-hydroxyacid dehydrogenase family. PdxB subfamily. Homodimer.

It is found in the cytoplasm. It catalyses the reaction 4-phospho-D-erythronate + NAD(+) = (R)-3-hydroxy-2-oxo-4-phosphooxybutanoate + NADH + H(+). It functions in the pathway cofactor biosynthesis; pyridoxine 5'-phosphate biosynthesis; pyridoxine 5'-phosphate from D-erythrose 4-phosphate: step 2/5. Its function is as follows. Catalyzes the oxidation of erythronate-4-phosphate to 3-hydroxy-2-oxo-4-phosphonooxybutanoate. The polypeptide is Erythronate-4-phosphate dehydrogenase (Pseudomonas fluorescens (strain ATCC BAA-477 / NRRL B-23932 / Pf-5)).